The sequence spans 226 residues: NADH-ubiquinone oxidoreductase chain 6 (226 aa).

A run of 5 helical transmembrane segments spans residues Ser-2–Leu-22, Ile-28–Val-48, Ile-56–Ile-76, Tyr-90–Thr-110, and Ile-169–Thr-189.

This sequence belongs to the complex I subunit 6 family.

It localises to the mitochondrion membrane. The catalysed reaction is a ubiquinone + NADH + 5 H(+)(in) = a ubiquinol + NAD(+) + 4 H(+)(out). Functionally, core subunit of the mitochondrial membrane respiratory chain NADH dehydrogenase (Complex I) that is believed to belong to the minimal assembly required for catalysis. Complex I functions in the transfer of electrons from NADH to the respiratory chain. The immediate electron acceptor for the enzyme is believed to be ubiquinone. The sequence is that of NADH-ubiquinone oxidoreductase chain 6 (nad6) from Dictyostelium citrinum (Slime mold).